The chain runs to 1720 residues: TOG array regulator of axonemal microtubules protein 1 (1720 aa).

TOG regions lie at residues 94 to 312 (EEDT…RRLE) and 352 to 596 (PQEL…MPSS). 8 HEAT repeats span residues 175–212 (AFSL…RSPG), 214–247 (VLRT…TEDL), 251–289 (LDLT…RLGQ), 345–384 (NLKF…KFNP), 390–427 (SSLV…RLGE), 431–466 (QFLG…MKEV), 467–504 (GPQQ…YPSE), and 506–543 (FDLP…SMGS). Composition is skewed to polar residues over residues 794–809 (FGSQ…QNPS), 819–829 (PVSSPRTSPKH), 842–852 (DNSVNFSNSWP), and 868–877 (LVSQKSSDPT). Disordered regions lie at residues 794-924 (FGSQ…SLLP), 970-998 (HSSL…ESPD), and 1067-1087 (KKIS…NPQQ). The span at 1073-1087 (AEQSPSAGSSSNPQQ) shows a compositional bias: polar residues. A TOG 3 region spans residues 1256 to 1425 (EIALTEALRL…YIKDSVRNLQ (170 aa)). HEAT repeat units lie at residues 1294–1331 (TKLH…YLKK) and 1335–1372 (QELD…NVTP). Positions 1430–1462 (GEIPLDTPSAKGRRSHTGSVGNTRSSSVSRDAF) are disordered. The segment covering 1446 to 1458 (TGSVGNTRSSSVS) has biased composition (polar residues). Positions 1484 to 1720 (SLESAEYLKL…LLDMTILNEL (237 aa)) are TOG 4. HEAT repeat units lie at residues 1485–1522 (LESA…NNQD), 1526–1563 (GNIV…LLRD), and 1567–1605 (PIIN…HVDN).

It belongs to the Crescerin family. In terms of assembly, interacts with ARMC9, CCDC66, CEP104 and CSPP1.

It is found in the cell projection. It localises to the cilium. The protein resides in the cytoplasm. The protein localises to the cytoskeleton. Its subcellular location is the cilium axoneme. Involved in ciliogenesis. It is required for appropriate acetylation and polyglutamylation of ciliary microtubules, and regulation of cilium length. Interacts with microtubules and promotes microtubule polymerization via its HEAT repeat domains, especially those in TOG region 2 and 4. In Homo sapiens (Human), this protein is TOG array regulator of axonemal microtubules protein 1.